Here is a 149-residue protein sequence, read N- to C-terminus: Large ribosomal subunit protein bL9 (149 aa).

Belongs to the bacterial ribosomal protein bL9 family.

Functionally, binds to the 23S rRNA. This chain is Large ribosomal subunit protein bL9, found in Endomicrobium trichonymphae.